A 139-amino-acid polypeptide reads, in one-letter code: Plastocyanin (139 aa).

A signal peptide spans Met-1–Ala-34. The Plastocyanin-like domain maps to Glu-35–Gly-139. His-73, Cys-123, His-126, and Met-131 together coordinate Cu cation.

This sequence belongs to the plastocyanin family. Requires Cu(2+) as cofactor.

The protein localises to the cellular thylakoid membrane. Its function is as follows. Participates in electron transfer between P700 and the cytochrome b6-f complex in photosystem I. This is Plastocyanin (petE) from Nostoc sp. (strain PCC 7120 / SAG 25.82 / UTEX 2576).